Consider the following 357-residue polypeptide: O-methyltransferase pgmB (357 aa).

An S-adenosyl-L-methionine-binding site is contributed by D206. Residue H256 is the Proton acceptor of the active site.

Belongs to the class I-like SAM-binding methyltransferase superfamily. Cation-independent O-methyltransferase family.

It participates in pigment biosynthesis. Its pathway is secondary metabolite biosynthesis. Its function is as follows. O-methyltransferase; part of the gene cluster that mediates the biosynthesis of pleosporalin A, ascomycone A, as well as a third cryptic naphthoquinone derived pigment, all responsible for the coloration of conidia. Specifically methylates position C-6 of the pgmA product 3-acetonyl-1,6,8-trihydroxy-2-naphthaldehyde to yield fusarubinaldehyde. The pathway begins with the biosynthesis of the cyclized heptaketide 3-acetonyl-1,6,8-trihydroxy-2-naphthaldehyde by the NR-PKS pgmA. The C-6 hydroxyl group is further methylated by the O-methyltransferase pgmB to yield fusarubinaldehyde which is in turn oxidized by the cytochrome P450 monooxygenase pgmC at C-9. The C-1 hydroxyl group is then methylated spontaneously. Although pgmE, pgmD and pgmH are essential for the production of pleosporalin A, it is not the case for the 2 other final products and it remains difficult to assign a specific function to each enzyme. PgmF and pgmG seem not to be involved in pigment biosynthesis although they were regulated by the cluster-specific transcription factor pgmR. The chain is O-methyltransferase pgmB from Aspergillus terreus (strain NIH 2624 / FGSC A1156).